The sequence spans 605 residues: Zinc metalloproteinase nas-34 (605 aa).

The first 19 residues, 1 to 19 (MVSYWPVLIVLCLLPICHA), serve as a signal peptide directing secretion. The propeptide occupies 20–124 (KSYFADFVNG…EFLYAIRGKR (105 aa)). A Peptidase M12A domain is found at 124 to 322 (RSMTSFLSER…VKRINFAYCN (199 aa)). Cystine bridges form between cysteine 165–cysteine 321 and cysteine 191–cysteine 211. Histidine 219 contacts Zn(2+). The active site involves glutamate 220. Zn(2+) is bound by residues histidine 223 and histidine 229. Positions 317–357 (NFAYCNSTCSNYLDCQNGGYINPNDCNNCKCPPGFGGQLCD) constitute an EGF-like domain. A glycan (N-linked (GlcNAc...) asparagine) is linked at asparagine 322. Disulfide bonds link cysteine 325–cysteine 345, cysteine 347–cysteine 356, cysteine 366–cysteine 388, and cysteine 415–cysteine 436. Residues 366-469 (CGAGDITATS…ARFSLNYRYD (104 aa)) form the CUB domain. A disordered region spans residues 479–526 (TTTSTTTTTAPITVPTVSPTTTTTRQTTTTARTSTTTTTTQAPPTTTT). One can recognise a TSP type-1 domain in the interval 525 to 566 (TTSTSQCASWSACSAQCGGCGTQSRRCGTYVETVYCNTNPCT). 3 cysteine pairs are disulfide-bonded: cysteine 531–cysteine 551, cysteine 537–cysteine 560, and cysteine 541–cysteine 565.

Zn(2+) is required as a cofactor. In terms of tissue distribution, expressed in hypodermal cells. First expressed in the dorsal and lateral surface area of the middle and posterior region of embryos. At later stages, it localizes to lateral surface regions, probably corresponding to hypodermal seam cells. In L1 larvae, it is expressed in seam cells and in a few cells anterior to the nerve ring.

It is found in the secreted. Its function is as follows. Metalloprotease. Required for normal hatching and migration of neuroblasts. May act by degrading eggshell proteins at hatching. In Caenorhabditis elegans, this protein is Zinc metalloproteinase nas-34 (hch-1).